A 145-amino-acid chain; its full sequence is Aminoglycoside N(6')-acetyltransferase type 1 (145 aa).

The region spanning 1-145 (MNIKPASEAS…KVVYFSKKID (145 aa)) is the N-acetyltransferase domain. The substrate site is built by Trp22, Tyr65, and Glu78. Acetyl-CoA is bound at residue 80–82 (IYV). Asp114 serves as a coordination point for substrate. Asn119 contacts acetyl-CoA. Substrate is bound at residue Glu135.

Homodimer.

The catalysed reaction is kanamycin B + acetyl-CoA = N(6')-acetylkanamycin B + CoA + H(+). Catalyzes the transfer of an acetyl group from acetyl-CoA to the 6'-amino group of aminoglycoside molecules conferring resistance to antibiotics containing the purpurosamine ring including amikacin, kanamycin, tobramycin and netilmicin. The chain is Aminoglycoside N(6')-acetyltransferase type 1 from Acinetobacter haemolyticus.